A 248-amino-acid polypeptide reads, in one-letter code: NADH dehydrogenase [ubiquinone] flavoprotein 2, mitochondrial (248 aa).

Residues Met-1–Asn-31 constitute a mitochondrion transit peptide. Residues Cys-134, Cys-139, Cys-175, and Cys-179 each contribute to the [2Fe-2S] cluster site. A Phosphotyrosine; by SRC modification is found at Tyr-192. The segment at Gly-229–Leu-248 is disordered.

It belongs to the complex I 24 kDa subunit family. In terms of assembly, core subunit of respiratory chain NADH dehydrogenase (Complex I) which is composed of 45 different subunits. This is a component of the flavoprotein-sulfur (FP) fragment of the enzyme. [2Fe-2S] cluster is required as a cofactor.

It is found in the mitochondrion inner membrane. The catalysed reaction is a ubiquinone + NADH + 5 H(+)(in) = a ubiquinol + NAD(+) + 4 H(+)(out). Its function is as follows. Core subunit of the mitochondrial membrane respiratory chain NADH dehydrogenase (Complex I) which catalyzes electron transfer from NADH through the respiratory chain, using ubiquinone as an electron acceptor. Parts of the peripheral arm of the enzyme, where the electrons from NADH are accepted by flavin mononucleotide (FMN) and then passed along a chain of iron-sulfur clusters by electron tunnelling to the final acceptor ubiquinone. Contains one iron-sulfur cluster. This is NADH dehydrogenase [ubiquinone] flavoprotein 2, mitochondrial from Rattus norvegicus (Rat).